The sequence spans 1504 residues: MSRESNDTIQSDTVRSSSKSDYFRIQLNNQDYYMSKPTFLDPSHGESLPLNQFSQVPNIRVFGALPTGHQVLCHVHGILPYMFIKYDGQITDTSTLRHQRCAQVHKTLEVKIRASFKRKKDDKHDLAGDKLGNLNFVADVSVVKGIPFYGYHVGWNLFYKISLLNPSCLSRISELIRDGKIFGKKFEIYESHIPYLLQWTADFNLFGCSWINVDRCYFRSPVLNSILDIDKLTINDDLQLLLDRFCDFKCNVLSRRDFPRVGNGLIEIDILPQFIKNREKLQHRDIHHDFLEKLGDISDIPVKPYVSSARDMINELTMQREELSLKEYKEPPETKRHVSGHQWQSSGEFEAFYKKAQHKTSTFDGQIPNFENFIDKNQKFSAINTPYEALPQLWPRLPQIEINNNSMQDKKNDDQVNASFTEYEICGVDNENEGVKGSNIKSRSYSWLPESIASPKDSTILLDHQTKYHNTINFSMDCAMTQNMASKRKLRSSVSANKTSLLSRKRKKVMAAGLRYGKRAFVYGEPPFGYQDILNKLEDEGFPKIDYKDPFFSNPVDLENKPYAYAGKRFEISSTHVSTRIPVQFGGETVSVYNKPTFDMFSSWKYALKPPTYDAVQKWYNKVPSMGNKKTESQISMHTPHSKFLYKFASDVSGKQKRKKSSVHDSLTHLTLEIHANTRSDKIPDPAIDEVSMIIWCLEEETFPLDLDIAYEGIMIVHKASEDSTFPTKIQHCINEIPVMFYESEFEMFEALTDLVLLLDPDILSGFEIHNFSWGYIIERCQKIHQFDIVRELARVKCQIKTKLSDTWGYAHSSGIMITGRHMINIWRALRSDVNLTQYTIESAAFNILHKRLPHFSFESLTNMWNAKKSTTELKTVLNYWLSRAQINIQLLRKQDYIARNIEQARLIGIDFHSVYYRGSQFKVESFLIRICKSESFILLSPGKKDVRKQKALECVPLVMEPESAFYKSPLIVLDFQSLYPSIMIGYNYCYSTMIGRVREINLTENNLGVSKFSLPRNILALLKNDVTIAPNGVVYAKTSVRKSTLSKMLTDILDVRVMIKKTMNEIGDDNTTLKRLLNNKQLALKLLANVTYGYTSASFSGRMPCSDLADSIVQTGRETLEKAIDIIEKDETWNAKVVYGDTDSLFVYLPGKTAIEAFSIGHAMAERVTQNNPKPIFLKFEKVYHPSILISKKRYVGFSYESPSQTLPIFDAKGIETVRRDGIPAQQKIIEKCIRLLFQTKDLSKIKKYLQNEFFKIQIGKVSAQDFCFAKEVKLGAYKSEKTAPAGAVVVKRRINEDHRAEPQYKERIPYLVVKGKQGQLLRERCVSPEEFLEGENLELDSEYYINKILIPPLDRLFNLIGINVGNWAQEIVKSKRASTTTTKVENITRVGTSATCCNCGEELTKICSLQLCDDCLEKRSTTTLSFLIKKLKRQKEYQTLKTVCRTCSYRYTSDAGIENDHIASKCNSYDCPVFYSRVKAERYLRDNQSVQREEALISLNDW.

4 residues coordinate Zn(2+): Cys1398, Cys1401, Cys1414, and Cys1417. The CysA-type zinc-finger motif lies at 1398–1417 (CCNCGEELTKICSLQLCDDC). 4 residues coordinate [4Fe-4S] cluster: Cys1446, Cys1449, Cys1468, and Cys1473. The CysB motif signature appears at 1446 to 1473 (CRTCSYRYTSDAGIENDHIASKCNSYDC).

It belongs to the DNA polymerase type-B family. In terms of assembly, forms DNA polymerase zeta with REV7. Requires [4Fe-4S] cluster as cofactor.

The protein localises to the mitochondrion. Its subcellular location is the nucleus. It carries out the reaction DNA(n) + a 2'-deoxyribonucleoside 5'-triphosphate = DNA(n+1) + diphosphate. Nonessential DNA polymerase. Required for DNA damage induced mutagenesis. Involved in DNA repair, mitochondrial DNA repair and translesion synthesis. Translesion synthesis in S.cerevisiae may use a specialized DNA polymerase that is not required for other DNA replicative processes. Has a role in the bypass of abasic (AP) sites. Highly inefficient in incorporating nucleotides opposite the AP site, but efficiently extends from nucleotides, particularly an A, inserted opposite the lesion. This Saccharomyces cerevisiae (strain ATCC 204508 / S288c) (Baker's yeast) protein is DNA polymerase zeta catalytic subunit (REV3).